The chain runs to 332 residues: L-lactate dehydrogenase A chain (332 aa).

Residues 29–57 and Arg-99 each bind NAD(+); that span reads GMVG…MEDK. Residues Arg-106, Asn-138, and Arg-169 each contribute to the substrate site. Asn-138 is an NAD(+) binding site. His-193 functions as the Proton acceptor in the catalytic mechanism. Thr-248 serves as a coordination point for substrate.

It belongs to the LDH/MDH superfamily. LDH family. As to quaternary structure, homotetramer.

Its subcellular location is the cytoplasm. It catalyses the reaction (S)-lactate + NAD(+) = pyruvate + NADH + H(+). It participates in fermentation; pyruvate fermentation to lactate; (S)-lactate from pyruvate: step 1/1. Interconverts simultaneously and stereospecifically pyruvate and lactate with concomitant interconversion of NADH and NAD(+). This is L-lactate dehydrogenase A chain (ldha) from Gillichthys seta (Shortjaw mudsucker).